A 262-amino-acid polypeptide reads, in one-letter code: MSASCAVPRLTRFAVFAVAGATALSLSACGSSNKSSSTSTSTSTSTSTVTSAAPSSTPNAEAKVSGLIASVAGNSIQVTKEDNATAAVNFTSATKITEAVPAGLPDVTQGSCLIVKPTEGSAPGQPVTAAKVKISESVNGTCPKPHESTPGGASSTPPSGSPSPAPAKPAWVRGSVASVSGDTINLTGTDASGNTTQTTVTVDDKTKYTKQTTANTEAIAPGKCLSARGTTDSGGALQATSIKLRQAVDGKCGKPKQPGQGG.

Positions M1–A28 are cleaved as a signal peptide. Low complexity-rich tracts occupy residues A28 to T57 and S148 to P158. 2 disordered regions span residues A28–A60 and V138–W171. C29 carries the N-palmitoyl cysteine lipid modification. Residue C29 is the site of S-diacylglycerol cysteine attachment.

It is found in the cell membrane. In Mycobacterium intracellulare, this protein is 27 kDa lipoprotein antigen (Mi43).